We begin with the raw amino-acid sequence, 160 residues long: Transcription factor 12 (160 aa).

A disordered region spans residues 1-58 (NKEKDENLHEPPSSDDMKSDDESSQKDIKVSSRGRTSTNEDEDLNPEQKIEREKERRM). Basic and acidic residues predominate over residues 15 to 30 (DDMKSDDESSQKDIKV). A Phosphoserine modification is found at S19. A Glycyl lysine isopeptide (Lys-Gly) (interchain with G-Cter in SUMO2) cross-link involves residue K29. At T36 the chain carries Phosphothreonine. S37 carries the post-translational modification Phosphoserine. The span at 46-58 (PEQKIEREKERRM) shows a compositional bias: basic and acidic residues. Residues 55 to 108 (ERRMANNARERLRVRDINEAFKELGRMCQLHLKSEKPQTKLLILHQAVAVILSL) enclose the bHLH domain. Residues K87 and K131 each participate in a glycyl lysine isopeptide (Lys-Gly) (interchain with G-Cter in SUMO2) cross-link. Positions 110–133 (QQVRERNLNPKAACLKRREEEKVS) are class A specific domain. The segment at 132–160 (VSVVSAEPPTTLPGTHPGLSETTNPMGHM) is disordered. Over residues 139 to 150 (PPTTLPGTHPGL) the composition is skewed to low complexity. Residues 151-160 (SETTNPMGHM) show a composition bias toward polar residues.

In terms of assembly, efficient DNA binding requires dimerization with another bHLH protein. Forms homo- or heterooligomers with myogenin, E12 and ITF2 proteins. Interacts with PTF1A. Interacts with RUNX1T1. Interacts with NEUROD2. Interacts with BHLHA9.

It is found in the nucleus. In terms of biological role, transcriptional regulator. Involved in the initiation of neuronal differentiation. Activates transcription by binding to the E box (5'-CANNTG-3'). May be involved in the functional network that regulates the development of the GnRH axis. The sequence is that of Transcription factor 12 (TCF12) from Papio hamadryas (Hamadryas baboon).